Consider the following 270-residue polypeptide: Undecaprenyl-diphosphatase (270 aa).

The next 8 membrane-spanning stretches (helical) occupy residues 14-34 (GLTEVLPISSSAHLILIPTFL), 40-60 (GITFDVALHLGTFIALCLYFW), 88-108 (FYIIAGTFPAAIVGKLFETTI), 117-137 (SLIALFLIVFALLLAFADTSG), 146-166 (ITLKSAIIIGLAQCLALIPGV), 189-209 (FSFLLSLPIVAGAALFELSGL), 221-241 (PLLIGIATSAVFGYISVAFLL), and 249-269 (LYPFVWYRIAIGCLALVFINF).

This sequence belongs to the UppP family.

The protein localises to the cell inner membrane. The enzyme catalyses di-trans,octa-cis-undecaprenyl diphosphate + H2O = di-trans,octa-cis-undecaprenyl phosphate + phosphate + H(+). In terms of biological role, catalyzes the dephosphorylation of undecaprenyl diphosphate (UPP). Confers resistance to bacitracin. This chain is Undecaprenyl-diphosphatase, found in Geotalea daltonii (strain DSM 22248 / JCM 15807 / FRC-32) (Geobacter daltonii).